The chain runs to 355 residues: UDP-N-acetylglucosamine--N-acetylmuramyl-(pentapeptide) pyrophosphoryl-undecaprenol N-acetylglucosamine transferase (355 aa).

Residues 15-17, Asn-127, Arg-163, Ser-191, Ile-244, 263-268, and Gln-288 each bind UDP-N-acetyl-alpha-D-glucosamine; these read TGG and ALTVSE.

Belongs to the glycosyltransferase 28 family. MurG subfamily.

The protein resides in the cell inner membrane. The catalysed reaction is di-trans,octa-cis-undecaprenyl diphospho-N-acetyl-alpha-D-muramoyl-L-alanyl-D-glutamyl-meso-2,6-diaminopimeloyl-D-alanyl-D-alanine + UDP-N-acetyl-alpha-D-glucosamine = di-trans,octa-cis-undecaprenyl diphospho-[N-acetyl-alpha-D-glucosaminyl-(1-&gt;4)]-N-acetyl-alpha-D-muramoyl-L-alanyl-D-glutamyl-meso-2,6-diaminopimeloyl-D-alanyl-D-alanine + UDP + H(+). It functions in the pathway cell wall biogenesis; peptidoglycan biosynthesis. Its function is as follows. Cell wall formation. Catalyzes the transfer of a GlcNAc subunit on undecaprenyl-pyrophosphoryl-MurNAc-pentapeptide (lipid intermediate I) to form undecaprenyl-pyrophosphoryl-MurNAc-(pentapeptide)GlcNAc (lipid intermediate II). The sequence is that of UDP-N-acetylglucosamine--N-acetylmuramyl-(pentapeptide) pyrophosphoryl-undecaprenol N-acetylglucosamine transferase from Salmonella newport (strain SL254).